Consider the following 432-residue polypeptide: Tol-Pal system protein TolB (432 aa).

An N-terminal signal peptide occupies residues 1 to 22 (MMFKKCLSVLFTCLIFISSARA).

This sequence belongs to the TolB family. As to quaternary structure, the Tol-Pal system is composed of five core proteins: the inner membrane proteins TolA, TolQ and TolR, the periplasmic protein TolB and the outer membrane protein Pal. They form a network linking the inner and outer membranes and the peptidoglycan layer.

Its subcellular location is the periplasm. Functionally, part of the Tol-Pal system, which plays a role in outer membrane invagination during cell division and is important for maintaining outer membrane integrity. In Marinomonas sp. (strain MWYL1), this protein is Tol-Pal system protein TolB.